Reading from the N-terminus, the 297-residue chain is Homoserine kinase (297 aa).

82–92 (PLTRGLGSSAS) lines the ATP pocket.

The protein belongs to the GHMP kinase family. Homoserine kinase subfamily.

The protein localises to the cytoplasm. It carries out the reaction L-homoserine + ATP = O-phospho-L-homoserine + ADP + H(+). Its pathway is amino-acid biosynthesis; L-threonine biosynthesis; L-threonine from L-aspartate: step 4/5. Functionally, catalyzes the ATP-dependent phosphorylation of L-homoserine to L-homoserine phosphate. This is Homoserine kinase from Bacillus thuringiensis (strain Al Hakam).